A 127-amino-acid chain; its full sequence is Small ribosomal subunit protein eS6 (127 aa).

This sequence belongs to the eukaryotic ribosomal protein eS6 family.

The protein is Small ribosomal subunit protein eS6 of Picrophilus torridus (strain ATCC 700027 / DSM 9790 / JCM 10055 / NBRC 100828 / KAW 2/3).